Here is a 272-residue protein sequence, read N- to C-terminus: uncharacterized protein (272 aa).

The disordered stretch occupies residues 193 to 250 (AFLLPNNSKGVEKSEENEDGVTDNDSSNVNSSTNESPNPTDINVCSNDDATDNTENNL). Over residues 215–233 (DNDSSNVNSSTNESPNPTD) the composition is skewed to low complexity. A compositionally biased stretch (polar residues) spans 235–248 (NVCSNDDATDNTEN).

It belongs to the pal1 family.

It is found in the cytoplasm. Its subcellular location is the nucleus. This is an uncharacterized protein from Schizosaccharomyces pombe (strain 972 / ATCC 24843) (Fission yeast).